Reading from the N-terminus, the 101-residue chain is Small ribosomal subunit protein uS14 (101 aa).

It belongs to the universal ribosomal protein uS14 family. As to quaternary structure, part of the 30S ribosomal subunit. Contacts proteins S3 and S10.

Its function is as follows. Binds 16S rRNA, required for the assembly of 30S particles and may also be responsible for determining the conformation of the 16S rRNA at the A site. The polypeptide is Small ribosomal subunit protein uS14 (Alcanivorax borkumensis (strain ATCC 700651 / DSM 11573 / NCIMB 13689 / SK2)).